Here is a 61-residue protein sequence, read N- to C-terminus: Large ribosomal subunit protein eL37 (61 aa).

Zn(2+)-binding residues include Cys20, Cys23, Cys35, and Cys38. Residues Cys20–Cys38 form a C4-type zinc finger.

This sequence belongs to the eukaryotic ribosomal protein eL37 family. Zn(2+) is required as a cofactor.

Its function is as follows. Binds to the 23S rRNA. The polypeptide is Large ribosomal subunit protein eL37 (Caldivirga maquilingensis (strain ATCC 700844 / DSM 13496 / JCM 10307 / IC-167)).